Reading from the N-terminus, the 289-residue chain is Bifunctional protein FolD (289 aa).

NADP(+) contacts are provided by residues 166–168, Ser191, and Ile232; that span reads GRS.

This sequence belongs to the tetrahydrofolate dehydrogenase/cyclohydrolase family. In terms of assembly, homodimer.

It carries out the reaction (6R)-5,10-methylene-5,6,7,8-tetrahydrofolate + NADP(+) = (6R)-5,10-methenyltetrahydrofolate + NADPH. The catalysed reaction is (6R)-5,10-methenyltetrahydrofolate + H2O = (6R)-10-formyltetrahydrofolate + H(+). The protein operates within one-carbon metabolism; tetrahydrofolate interconversion. Functionally, catalyzes the oxidation of 5,10-methylenetetrahydrofolate to 5,10-methenyltetrahydrofolate and then the hydrolysis of 5,10-methenyltetrahydrofolate to 10-formyltetrahydrofolate. The chain is Bifunctional protein FolD from Synechococcus elongatus (strain ATCC 33912 / PCC 7942 / FACHB-805) (Anacystis nidulans R2).